The primary structure comprises 944 residues: Calcium-transporting ATPase type 2C member 2 (944 aa).

Residues 1–104 are Cytoplasmic-facing; the sequence is MGRRLKFLQK…DNAEPVWKKY (104 aa). The interaction with ORAI1 stretch occupies residues 69 to 93; it reads VDLDSGLSEFAVAQRRLVHGWNEFV. Residues 105 to 125 form a helical membrane-spanning segment; sequence LDQFRNPLILLLLGSSVVSVL. Topologically, residues 126-127 are extracellular; sequence TK. Residues 128-148 form a helical membrane-spanning segment; sequence EYEDAVSIALAVLIVVTVGFI. Topologically, residues 149 to 229 are cytoplasmic; the sequence is QEYRSEKSLE…EVEPCGKTDS (81 aa). Residues 230–250 form a helical membrane-spanning segment; that stretch reads PLADGGDLSTLSNVVFMGTLV. Over 251–291 the chain is Extracellular; that stretch reads QCGKGQGVVIGTGEQSQFGEVFKMMRAEETPKTPLQKSMDK. Phosphothreonine is present on T262. S266 is subject to Phosphoserine. The chain crosses the membrane as a helical span at residues 292–312; that stretch reads LGKQLTIFSFGIIGLLMLVGW. At 313-329 the chain is on the cytoplasmic side; the sequence is VQGKPFLSMFTVGVSLA. The Ca(2+) site is built by V330, A331, I333, and E335. Residues 330-350 traverse the membrane as a helical segment; that stretch reads VAAIPEGLPIVVMVTLVLGVL. The Extracellular segment spans residues 351–748; it reads RMAKKRVIVK…IAALSLITLS (398 aa). The active-site 4-aspartylphosphate intermediate is D377. Residues D672 and D676 each coordinate Mg(2+). A helical membrane pass occupies residues 749 to 769; that stretch reads TVCNLPSPLNAMQILWVNIIM. Residues N766 and D770 each coordinate Ca(2+). The Cytoplasmic portion of the chain corresponds to 770–802; it reads DGPPAQSLGVEPVDRDALRRPPRSVGDTILNRA. Residues 803 to 823 form a helical membrane-spanning segment; that stretch reads LILRVLMSAAVIIGGTLFIFW. The Extracellular portion of the chain corresponds to 824-835; that stretch reads REIPANGTSTPR. The chain crosses the membrane as a helical span at residues 836-853; it reads TTTMAFTCFVFFDLFNAL. The Cytoplasmic portion of the chain corresponds to 854–872; that stretch reads SCRSQTKLIFEIGFFRNRM. The helical transmembrane segment at 873 to 893 threads the bilayer; the sequence is FLYSVLGSLLGQLAVIYAPPL. The Extracellular segment spans residues 894–903; the sequence is QKVFQTENLS. The helical transmembrane segment at 904-924 threads the bilayer; sequence ALDLLLLTGLASSVFILSELL. The Cytoplasmic portion of the chain corresponds to 925 to 944; sequence KLWEKFLSRARPTQMLPEAV.

It belongs to the cation transport ATPase (P-type) (TC 3.A.3) family. Type IIA subfamily. In terms of assembly, interacts (via N-terminus) with ORAI1 (via N- and C-termini); this interaction regulates Ca(2+) influx at the plasma membrane. In terms of tissue distribution, expressed in hippocampal neurons (at protein level). Expressed in lactating mammary epithelium (at protein level).

Its subcellular location is the golgi apparatus. It localises to the trans-Golgi network membrane. The protein localises to the cell membrane. The protein resides in the basolateral cell membrane. It catalyses the reaction Ca(2+)(in) + ATP + H2O = Ca(2+)(out) + ADP + phosphate + H(+). The catalysed reaction is Mn(2+)(in) + ATP + H2O = Mn(2+)(out) + ADP + phosphate + H(+). In terms of biological role, ATP-driven pump that supplies the Golgi apparatus with Ca(2+) and Mn(2+) ions, both essential cofactors for processing and trafficking of newly synthesized proteins in the secretory pathway. Within a catalytic cycle, acquires Ca(2+) or Mn(2+) ions on the cytoplasmic side of the membrane and delivers them to the lumenal side. The transfer of ions across the membrane is coupled to ATP hydrolysis and is associated with a transient phosphorylation that shifts the pump conformation from inward-facing to outward-facing state. Induces Ca(2+) influx independently of its ATP-driven pump function. At the basolateral membrane of mammary epithelial cells, interacts with Ca(2+) channel ORAI1 and mediates Ca(2+) entry independently of the Ca(2+) content of endoplasmic reticulum or Golgi stores. May facilitate transepithelial transport of large quantities of Ca(2+) for milk secretion via activation of Ca(2+) influx channels at the plasma membrane and active Ca(2+) transport at the Golgi apparatus. The polypeptide is Calcium-transporting ATPase type 2C member 2 (Mus musculus (Mouse)).